Consider the following 251-residue polypeptide: Putative integrase/recombinase y4eF (251 aa).

The region spanning 1–40 is the Core-binding (CB) domain; it reads MLGREDIRTYQVYLANEKKLAPGSIHIALSALRFFFNVTL. Residues 58-231 form the Tyr recombinase domain; that stretch reads KLPIILSPDE…ATNKVCATES (174 aa). Catalysis depends on residues arginine 93, lysine 118, histidine 183, arginine 186, and histidine 209. Residue tyrosine 218 is the O-(3'-phospho-DNA)-tyrosine intermediate of the active site.

This sequence belongs to the 'phage' integrase family.

The chain is Putative integrase/recombinase y4eF from Sinorhizobium fredii (strain NBRC 101917 / NGR234).